Consider the following 198-residue polypeptide: Proteasome subunit beta type-4 (198 aa).

Met-1 is subject to N-acetylmethionine. Ser-76 is subject to Phosphoserine.

It belongs to the peptidase T1B family. As to quaternary structure, the 26S proteasome consists of a 20S proteasome core and two 19S regulatory subunits. The 20S proteasome core is composed of 28 subunits that are arranged in four stacked rings, resulting in a barrel-shaped structure. The two end rings are each formed by seven alpha subunits, and the two central rings are each formed by seven beta subunits. The catalytic chamber with the active sites is on the inside of the barrel.

It localises to the cytoplasm. The protein localises to the nucleus. Its function is as follows. Non-catalytic component of the proteasome which degrades poly-ubiquitinated proteins in the cytoplasm and in the nucleus. It is essential for the regulated turnover of proteins and for the removal of misfolded proteins. The proteasome is a multicatalytic proteinase complex that is characterized by its ability to cleave peptides with Arg, Phe, Tyr, Leu, and Glu adjacent to the leaving group at neutral or slightly basic pH. It has an ATP-dependent proteolytic activity. This subunit has a chymotrypsin-like activity. The sequence is that of Proteasome subunit beta type-4 (PRE1) from Saccharomyces cerevisiae (strain ATCC 204508 / S288c) (Baker's yeast).